Consider the following 338-residue polypeptide: MATRARGLSLLRGRLGRGPARAPGVAERAWRGFGSSSRRHEAVIISGTEMAKQIRRELQQGVESWLALGNRRPHLSIILVGDNPASHTYVRNKIRAASAVGICSELIVKPKNVSQEELLDITDQLNMDPRVSGILVQLPLPDHVDERTICNGIAPEKDVDGFHIINIGRLCLDQHSLIPATASAVWEIIKRAGIETFGKNVVVAGRSKNVGMPIAMLLHTDGEHERPGGDATVTIAHRHTPREQLKAHTQLAEIIIVAAGIPGLITADMVREGATVIDVGINYVQDPVTGKTKLVGDVDFEAVKKKASFITPVPGGVGPMTVAMLLKNTLLAAKNITY.

Residues 89–93 (YVRNK) and 136–138 (VQL) each bind substrate. Residues 205–207 (GRS) and Arg-238 contribute to the NAD(+) site. Position 314 to 318 (314 to 318 (PGGVG)) interacts with substrate.

It belongs to the tetrahydrofolate dehydrogenase/cyclohydrolase family. It depends on Mg(2+) as a cofactor. Widely expressed.

It is found in the mitochondrion inner membrane. The catalysed reaction is (6R)-5,10-methylene-5,6,7,8-tetrahydrofolate + NADP(+) = (6R)-5,10-methenyltetrahydrofolate + NADPH. It carries out the reaction (6R)-5,10-methylene-5,6,7,8-tetrahydrofolate + NAD(+) = (6R)-5,10-methenyltetrahydrofolate + NADH. The enzyme catalyses (6R)-5,10-methenyltetrahydrofolate + H2O = (6R)-10-formyltetrahydrofolate + H(+). It functions in the pathway one-carbon metabolism; tetrahydrofolate interconversion. Functionally, bifunctional mitochondrial folate-interconverting enzyme that has both NAD/NADP-dependent methylenetetrahydrofolate dehydrogenase and methenyltetrahydrofolate cyclohydrolase activities. Its function is as follows. Has no NAD/NADP-dependent methylenetetrahydrofolate dehydrogenase activity. This is Bifunctional methylenetetrahydrofolate dehydrogenase/cyclohydrolase 2, mitochondrial from Rattus norvegicus (Rat).